A 34-amino-acid polypeptide reads, in one-letter code: Photosystem II reaction center protein Psb30 (34 aa).

The chain crosses the membrane as a helical span at residues 7–27 (VAQLLALFVIITSGPAIIILI).

The protein belongs to the Psb30/Ycf12 family. PSII is composed of 1 copy each of membrane proteins PsbA, PsbB, PsbC, PsbD, PsbE, PsbF, PsbH, PsbI, PsbJ, PsbK, PsbL, PsbM, PsbT, PsbX, PsbY, PsbZ, Psb30/Ycf12, peripheral proteins of the oxygen-evolving complex and a large number of cofactors. It forms dimeric complexes.

Its subcellular location is the plastid. The protein resides in the chloroplast thylakoid membrane. Functionally, a core subunit of photosystem II (PSII), probably helps stabilize the reaction center. The sequence is that of Photosystem II reaction center protein Psb30 from Guillardia theta (Cryptophyte).